A 410-amino-acid polypeptide reads, in one-letter code: Lissencephaly-1 homolog (410 aa).

The LisH domain maps to 7 to 39; sequence QRDELNRAIADYLRSNGYEEAYSVFKKEAELDM. A coiled-coil region spans residues 56–82; it reads TSVIRLQKKVMELESKLNEAKEEFTSG. 7 WD repeats span residues 106 to 147, 148 to 189, 190 to 229, 232 to 271, 274 to 333, 336 to 377, and 379 to 410; these read GHRS…RTLK, GHTD…RTMH, GHDH…CVKT, GHRE…CKAE, EHEH…CLMT, GHDN…KTLN, and HEHF…WECR.

This sequence belongs to the WD repeat LIS1/nudF family. As to quaternary structure, can self-associate. Component of the cytosolic PAF-AH (I) heterotetrameric enzyme, which is composed of PAFAH1B1 (beta), PAFAH1B2 (alpha2) and PAFAH1B3 (alpha1) subunits. The catalytic activity of the enzyme resides in the alpha1 (PAFAH1B3) and alpha2 (PAFAH1B2) subunits, whereas the beta subunit (PAFAH1B1) has regulatory activity. Trimer formation is not essential for the catalytic activity. Interacts with dynein, dynactin, nde1 and ndel1.

It is found in the cytoplasm. The protein localises to the cytoskeleton. The protein resides in the microtubule organizing center. Its subcellular location is the centrosome. Its function is as follows. Regulatory subunit (beta subunit) of the cytosolic type I platelet-activating factor (PAF) acetylhydrolase (PAF-AH (I)), an enzyme that catalyzes the hydrolyze of the acetyl group at the sn-2 position of PAF and its analogs and participates in PAF inactivation. Regulates the PAF-AH (I) activity in a catalytic dimer composition-dependent manner. Positively regulates the activity of the minus-end directed microtubule motor protein dynein. May enhance dynein-mediated microtubule sliding by targeting dynein to the microtubule plus end. Required for several dynein- and microtubule-dependent processes such as the maintenance of Golgi integrity, the peripheral transport of microtubule fragments and the coupling of the nucleus and centrosome. May be required for proliferation of neuronal precursors and neuronal migration. The protein is Lissencephaly-1 homolog (pafah1b1) of Xenopus laevis (African clawed frog).